Consider the following 506-residue polypeptide: Maturase K (506 aa).

This sequence belongs to the intron maturase 2 family. MatK subfamily.

The protein localises to the plastid. It is found in the chloroplast. In terms of biological role, usually encoded in the trnK tRNA gene intron. Probably assists in splicing its own and other chloroplast group II introns. The chain is Maturase K from Trifolium hirtum (Rose clover).